The following is a 197-amino-acid chain: Imidazoleglycerol-phosphate dehydratase (197 aa).

The protein belongs to the imidazoleglycerol-phosphate dehydratase family.

The protein localises to the cytoplasm. The catalysed reaction is D-erythro-1-(imidazol-4-yl)glycerol 3-phosphate = 3-(imidazol-4-yl)-2-oxopropyl phosphate + H2O. It participates in amino-acid biosynthesis; L-histidine biosynthesis; L-histidine from 5-phospho-alpha-D-ribose 1-diphosphate: step 6/9. This Pseudomonas putida (strain ATCC 700007 / DSM 6899 / JCM 31910 / BCRC 17059 / LMG 24140 / F1) protein is Imidazoleglycerol-phosphate dehydratase.